The primary structure comprises 574 residues: Actin-binding protein wsp1 (574 aa).

One can recognise a WH1 domain in the interval 19–130 (IPKSTNKIIA…KKVLDKGCHP (112 aa)). Disordered stretches follow at residues 144 to 186 (KGSS…ELLN), 221 to 494 (AGTP…IAEL), and 517 to 574 (KSRK…DEWD). Residues 149–158 (HAPNNSNIQP) are compositionally biased toward polar residues. Composition is skewed to pro residues over residues 230–240 (PPIPPSIPSSR) and 251–260 (PAPPPIPPPS). Low complexity-rich tracts occupy residues 297-306 (SRVSAAALAA) and 324-335 (KPPIGNGSSNSS). Positions 352 to 368 (PLPPQGRSAPPPPPPRS) are enriched in pro residues. Ser-386 is modified (phosphoserine). Residues 415–485 (PPVPTPPSLP…PPPAPAPAPA (71 aa)) show a composition bias toward pro residues. In terms of domain architecture, WH2 spans 499 to 518 (GRANLMASIRASGGMDLLKS). Polar residues predominate over residues 521-545 (VSASPSVASTKTSNPPVEAPPSNNL). Positions 563–574 (SDEEDEDDDEWD) are enriched in acidic residues.

Interacts with vrp1.

It localises to the cytoplasm. Its subcellular location is the cytoskeleton. In terms of biological role, has a role in regulating actin assembly, so regulating polarized growth. The protein is Actin-binding protein wsp1 (wsp1) of Schizosaccharomyces pombe (strain 972 / ATCC 24843) (Fission yeast).